Here is a 306-residue protein sequence, read N- to C-terminus: Elongation factor Ts (306 aa).

The interval 80–83 (TDFV) is involved in Mg(2+) ion dislocation from EF-Tu.

The protein belongs to the EF-Ts family.

It localises to the cytoplasm. Its function is as follows. Associates with the EF-Tu.GDP complex and induces the exchange of GDP to GTP. It remains bound to the aminoacyl-tRNA.EF-Tu.GTP complex up to the GTP hydrolysis stage on the ribosome. In Methylorubrum populi (strain ATCC BAA-705 / NCIMB 13946 / BJ001) (Methylobacterium populi), this protein is Elongation factor Ts.